The sequence spans 596 residues: Probable ATP-dependent RNA helicase DDX52 (596 aa).

N6-acetyllysine is present on lysine 15. Phosphoserine is present on serine 39. The interval 68–94 (LPDEEKTEESQIERKKQNRKKKKITSE) is disordered. The Q motif signature appears at 163-191 (QLDQEYKINSRLLQNILDAGFQTPTPIQM). The region spanning 194-372 (IPVMLHGREL…RLNLDSVITV (179 aa)) is the Helicase ATP-binding domain. 207 to 214 (APTGSGKT) provides a ligand contact to ATP. Residues 316–319 (DESD) carry the DEAD box motif. Residues 383–544 (TVEQELLFVG…PVPEYIKGFQ (162 aa)) form the Helicase C-terminal domain. The segment at 575-596 (AKDKRKKVTGQNKKKVAPEDKS) is disordered. The segment covering 577–589 (DKRKKVTGQNKKK) has biased composition (basic residues).

It belongs to the DEAD box helicase family. DDX52/ROK1 subfamily.

The protein resides in the nucleus. The protein localises to the nucleolus. The enzyme catalyses ATP + H2O = ADP + phosphate + H(+). The protein is Probable ATP-dependent RNA helicase DDX52 (DDX52) of Bos taurus (Bovine).